Here is a 176-residue protein sequence, read N- to C-terminus: Prenylated Rab acceptor 1 (176 aa).

At methionine 1 the chain carries N-acetylmethionine. The SKL peroxisome targeting motif signature appears at 11 to 13 (SRF). Serine 18 carries the post-translational modification Phosphoserine. A run of 2 helical transmembrane segments spans residues 84–104 (LLTN…IVGI) and 129–149 (VCVA…LWLI).

The protein belongs to the PRA1 family. Interacts with YIP1 and the Rab GTPases SEC4, YPT1, YPT6, YPT10, YPT11, YPT31, YPT32 and YPT52.

It is found in the golgi apparatus membrane. The protein localises to the peroxisome membrane. This is Prenylated Rab acceptor 1 (YIP3) from Saccharomyces cerevisiae (strain ATCC 204508 / S288c) (Baker's yeast).